Reading from the N-terminus, the 366-residue chain is HTH-type transcriptional regulator MSMEG_6044/MSMEI_5883 (366 aa).

One can recognise an HTH lacI-type domain in the interval 11-66 (ATLASLAAELKVSRTTISNAYNRPDQLSADLRERIFDAAKRLGYPGPDPVARSLRT). A DNA-binding region (H-T-H motif) is located at residues 13 to 32 (LASLAAELKVSRTTISNAYN).

Its function is as follows. Transcriptional regulator that negatively regulates transcription of the mce4 operon, which is involved in cholesterol transport and utilization. Acts by binding to the promoter region of the mce4 operon. In Mycolicibacterium smegmatis (strain ATCC 700084 / mc(2)155) (Mycobacterium smegmatis), this protein is HTH-type transcriptional regulator MSMEG_6044/MSMEI_5883.